Reading from the N-terminus, the 102-residue chain is Small ribosomal subunit protein uS10 (102 aa).

This sequence belongs to the universal ribosomal protein uS10 family. As to quaternary structure, part of the 30S ribosomal subunit.

Functionally, involved in the binding of tRNA to the ribosomes. This chain is Small ribosomal subunit protein uS10, found in Rhizobium meliloti (strain 1021) (Ensifer meliloti).